Consider the following 25-residue polypeptide: GIGAAILSAGKSIIKGLANGLAEHF.

Phenylalanine amide is present on F25.

It belongs to the bombinin family. As to expression, expressed by the skin glands.

Its subcellular location is the secreted. Its function is as follows. Has antimicrobial activity, but no hemolytic activity. Preference on killing Gram-negative non-enteric bacteria. The sequence is that of Bombinin-like peptide 4 from Bombina orientalis (Oriental fire-bellied toad).